We begin with the raw amino-acid sequence, 325 residues long: Thiamine-monophosphate kinase (325 aa).

Asp-30, Ser-45, Thr-46, and Asp-47 together coordinate Mg(2+). His-54 is a substrate binding site. Mg(2+) is bound by residues Asp-75 and Asp-122. ATP-binding positions include 121 to 122 and Arg-146; that span reads GD. Asp-212 is a Mg(2+) binding site. Ser-214 is an ATP binding site. Asp-215 is a Mg(2+) binding site. Glu-263 and Tyr-319 together coordinate substrate.

It belongs to the thiamine-monophosphate kinase family.

The enzyme catalyses thiamine phosphate + ATP = thiamine diphosphate + ADP. The protein operates within cofactor biosynthesis; thiamine diphosphate biosynthesis; thiamine diphosphate from thiamine phosphate: step 1/1. Its activity is regulated as follows. Is markedly activated by the monovalent cations K(+), NH(4)(+), and Rb(+). Is significantly inhibited by ADP, AMP, p-chloromercuribenzoate, N-ethylmaleimide, pyrophosphate, and EDTA. Functionally, catalyzes the ATP-dependent phosphorylation of thiamine-monophosphate (TMP) to form thiamine-pyrophosphate (TPP), the active form of vitamin B1. Cannot use thiamine as substrate. Is highly specific for ATP as phosphate donor. This chain is Thiamine-monophosphate kinase (thiL), found in Escherichia coli (strain K12).